The following is a 61-amino-acid chain: Alpha-conotoxin CnIJ (61 aa).

Residues Met-1–Ser-17 form the signal peptide. Residues Phe-18–Asn-44 constitute a propeptide that is removed on maturation. 2 disulfide bridges follow: Cys-47–Cys-52 and Cys-48–Cys-59. Cys-59 carries the cysteine amide modification.

This sequence belongs to the conotoxin A superfamily. As to expression, expressed by the venom duct.

The protein resides in the secreted. This Conus consors (Singed cone) protein is Alpha-conotoxin CnIJ.